Here is a 397-residue protein sequence, read N- to C-terminus: Subtilisin-like protease 3 (397 aa).

The N-terminal stretch at 1-19 (MGCIKVISVFLAAIAAVDA) is a signal peptide. The propeptide occupies 20–116 (RAFFHNRGGS…VEHDRVVKLA (97 aa)). One can recognise an Inhibitor I9 domain in the interval 35–116 (SYIVVMKDGV…VEHDRVVKLA (82 aa)). The 272-residue stretch at 126 to 397 (TWGLGRVSHR…NRLLYNGSGQ (272 aa)) folds into the Peptidase S8 domain. Active-site charge relay system residues include aspartate 158 and histidine 189. N-linked (GlcNAc...) asparagine glycosylation occurs at asparagine 250. Serine 344 functions as the Charge relay system in the catalytic mechanism. Residue asparagine 393 is glycosylated (N-linked (GlcNAc...) asparagine).

Belongs to the peptidase S8 family.

The protein resides in the secreted. In terms of biological role, secreted subtilisin-like serine protease with keratinolytic activity that contributes to pathogenicity. This chain is Subtilisin-like protease 3 (SUB3), found in Trichophyton tonsurans (Scalp ringworm fungus).